Here is a 402-residue protein sequence, read N- to C-terminus: Phosphoglycerate kinase (402 aa).

Residues 24–26, R40, 63–66, R122, and R155 contribute to the substrate site; these read DFN and HFGR. ATP is bound by residues K206, G297, E328, and 357-360; that span reads GGDS.

It belongs to the phosphoglycerate kinase family. Monomer.

The protein localises to the cytoplasm. The catalysed reaction is (2R)-3-phosphoglycerate + ATP = (2R)-3-phospho-glyceroyl phosphate + ADP. It participates in carbohydrate degradation; glycolysis; pyruvate from D-glyceraldehyde 3-phosphate: step 2/5. The protein is Phosphoglycerate kinase of Synechococcus sp. (strain RCC307).